The sequence spans 345 residues: L-rhamnose-proton symporter (345 aa).

10 helical membrane-spanning segments follow: residues 4 to 24 (AITMGILWHLIGAASAACFYA), 38 to 58 (WSVGGVVSWLILPWVVSALLL), 68 to 88 (FSAATLLPVFLFGAMWGIGNI), 101 to 121 (MGIGIAIGITLIVGTLMTPLL), 131 to 151 (TAGGRMTLLGVFVALVGVAIV), 175 to 195 (LVLAVLCGVFSAGMSFAMDAA), 214 to 234 (LPSYVVIMGGGALINLGFCFI), 259 to 279 (VLLSALGGLMWYLQFFFYAWG), 290 to 310 (ISWMLHMSFYVLCGGIVGLLL), and 323 to 343 (VLSLGCVVIIVAANIVGLGMA).

The protein belongs to the L-rhamnose transporter (TC 2.A.7.6) family.

The protein resides in the cell inner membrane. The enzyme catalyses L-rhamnopyranose(in) + H(+)(in) = L-rhamnopyranose(out) + H(+)(out). Its function is as follows. Uptake of L-rhamnose across the cytoplasmic membrane with the concomitant transport of protons into the cell (symport system). This is L-rhamnose-proton symporter from Cronobacter sakazakii (strain ATCC BAA-894) (Enterobacter sakazakii).